Reading from the N-terminus, the 62-residue chain is Photosystem II reaction center protein Z (62 aa).

A run of 2 helical transmembrane segments spans residues 8–28 and 41–61; these read AVFALIATSSILLISVPVVFA and FSGTSLWIGLVFLVGILNSLI.

It belongs to the PsbZ family. In terms of assembly, PSII is composed of 1 copy each of membrane proteins PsbA, PsbB, PsbC, PsbD, PsbE, PsbF, PsbH, PsbI, PsbJ, PsbK, PsbL, PsbM, PsbT, PsbY, PsbZ, Psb30/Ycf12, at least 3 peripheral proteins of the oxygen-evolving complex and a large number of cofactors. It forms dimeric complexes.

Its subcellular location is the plastid. The protein localises to the chloroplast thylakoid membrane. May control the interaction of photosystem II (PSII) cores with the light-harvesting antenna, regulates electron flow through the 2 photosystem reaction centers. PSII is a light-driven water plastoquinone oxidoreductase, using light energy to abstract electrons from H(2)O, generating a proton gradient subsequently used for ATP formation. This chain is Photosystem II reaction center protein Z, found in Vitis vinifera (Grape).